The following is a 505-amino-acid chain: AMP phosphorylase (505 aa).

Residues G170, 196-201 (SRAITS), and T205 each bind AMP. D258 (proton donor) is an active-site residue. 2 residues coordinate AMP: S266 and K290.

This sequence belongs to the thymidine/pyrimidine-nucleoside phosphorylase family. Type 2 subfamily.

The catalysed reaction is AMP + phosphate = alpha-D-ribose 1,5-bisphosphate + adenine. The enzyme catalyses CMP + phosphate = cytosine + alpha-D-ribose 1,5-bisphosphate. It catalyses the reaction UMP + phosphate = alpha-D-ribose 1,5-bisphosphate + uracil. Functionally, catalyzes the conversion of AMP and phosphate to adenine and ribose 1,5-bisphosphate (R15P). Exhibits phosphorylase activity toward CMP and UMP in addition to AMP. Functions in an archaeal AMP degradation pathway, together with R15P isomerase and RubisCO. This is AMP phosphorylase from Methanococcus maripaludis (strain DSM 14266 / JCM 13030 / NBRC 101832 / S2 / LL).